The primary structure comprises 230 residues: Large ribosomal subunit protein uL1 (230 aa).

This sequence belongs to the universal ribosomal protein uL1 family. In terms of assembly, part of the 50S ribosomal subunit.

Binds directly to 23S rRNA. The L1 stalk is quite mobile in the ribosome, and is involved in E site tRNA release. In terms of biological role, protein L1 is also a translational repressor protein, it controls the translation of the L11 operon by binding to its mRNA. The polypeptide is Large ribosomal subunit protein uL1 (Gluconobacter oxydans (strain 621H) (Gluconobacter suboxydans)).